A 268-amino-acid chain; its full sequence is Tryptophan synthase alpha chain (268 aa).

Catalysis depends on proton acceptor residues Glu49 and Asp60.

This sequence belongs to the TrpA family. As to quaternary structure, tetramer of two alpha and two beta chains.

It carries out the reaction (1S,2R)-1-C-(indol-3-yl)glycerol 3-phosphate + L-serine = D-glyceraldehyde 3-phosphate + L-tryptophan + H2O. Its pathway is amino-acid biosynthesis; L-tryptophan biosynthesis; L-tryptophan from chorismate: step 5/5. Its function is as follows. The alpha subunit is responsible for the aldol cleavage of indoleglycerol phosphate to indole and glyceraldehyde 3-phosphate. The chain is Tryptophan synthase alpha chain from Dechloromonas aromatica (strain RCB).